A 243-amino-acid chain; its full sequence is Vesicle-associated membrane protein-associated protein B (243 aa).

Residue Ala-2 is modified to N-acetylalanine. The Cytoplasmic portion of the chain corresponds to 2–218 (AKVEQVLSLE…PASAMAGKEE (217 aa)). The 118-residue stretch at 7 to 124 (VLSLEPQHEL…MDSKLRCVFE (118 aa)) folds into the MSP domain. Residue Ser-146 is modified to Phosphoserine. Lys-147 participates in a covalent cross-link: Glycyl lysine isopeptide (Lys-Gly) (interchain with G-Cter in SUMO1). Position 150 is a phosphothreonine (Thr-150). Residues Ser-158, Ser-159, and Ser-160 each carry the phosphoserine modification. Residues 161–196 (LDDTEVKKVMEECKRLQSEVQRLREENKQFKEEDGL) adopt a coiled-coil conformation. Over residues 186–197 (ENKQFKEEDGLR) the composition is skewed to basic and acidic residues. The segment at 186 to 214 (ENKQFKEEDGLRMRKTAQSNSPAPASAMA) is disordered. Position 206 is a phosphoserine (Ser-206). The chain crosses the membrane as a helical; Anchor for type IV membrane protein span at residues 219 to 239 (GLSTRLLALVVLFFIVGVIIG).

Belongs to the VAMP-associated protein (VAP) (TC 9.B.17) family. In terms of assembly, homodimer, and heterodimer with VAPA. Interacts with VAMP1 and VAMP2. Interacts (via MSP domain) with ZFYVE27. Interacts with RMDN3. Interacts with KIF5A in a ZFYVE27-dependent manner. Interacts (via MSP domain) with STARD3 (via phospho-FFAT motif). Interacts with STARD3NL (via FFAT motif). Interacts with CERT1. Interacts with PLEKHA3 and SACM1L to form a ternary complex. Interacts with VPS13A (via FFAT motif). Interacts with RB1CC1 (via phosphorylated FFAT motif), MIGA2 (via phosphorylated FFAT motif), RMDN3 (via phosphorylated FFAT motif), OSBPL1A (via FFAT motif), KCNB1 (via phosphorylated FFAT motif) and KCNB2 (via phosphorylated FFAT motif). Interacts (via MSP domain) with WDR44 (via FFAT motif); the interactions connect the endoplasmic reticulum (ER) with the endosomal tubule.

The protein localises to the endoplasmic reticulum membrane. Its function is as follows. Endoplasmic reticulum (ER)-anchored protein that mediates the formation of contact sites between the ER and endosomes via interaction with FFAT motif-containing proteins such as STARD3 or WDR44. Interacts with STARD3 in a FFAT motif phosphorylation dependent manner. Via interaction with WDR44 participates in neosynthesized protein export. Participates in the endoplasmic reticulum unfolded protein response (UPR) by inducing ERN1/IRE1 activity. Involved in cellular calcium homeostasis regulation. This chain is Vesicle-associated membrane protein-associated protein B, found in Bos taurus (Bovine).